Consider the following 655-residue polypeptide: Epithelial sodium channel subunit gamma (655 aa).

The Cytoplasmic segment spans residues 1–55 (MAPGEKIKAKIKKNLPVRGPQAPTIKDLMHWYCLNTNTHGCRRIVVSRGRLRRLL). Residues 56–76 (WIAFTLTAVALIIWQCALLVF) form a helical membrane-spanning segment. Over 77 to 547 (SFYTVSVSIK…GGQLGLWMSC (471 aa)) the chain is Extracellular. Cystine bridges form between C100–C289, C213–C220, C266–C273, C378–C463, C400–C459, C404–C455, C413–C440, and C415–C429. Residues 140 to 227 (RKRREAGSMR…SDCATYTFSS (88 aa)) are gating release of inhibition by proteolysis (GRIP); protease-sensitive region that is responsible for the proteolytic activation of the channel. A glycan (N-linked (GlcNAc...) asparagine) is linked at N215. N277 carries N-linked (GlcNAc...) asparagine glycosylation. N-linked (GlcNAc...) asparagine glycosylation is present at N503. The helical transmembrane segment at 548–568 (SVVCVIEIIEVFFIDFFSIIA) threads the bilayer. Residues 569–655 (RRQWQKAKDW…LTDTQLTNEF (87 aa)) lie on the Cytoplasmic side of the membrane. The segment at 582–636 (RRTPPSTETPSSQQGQDNPALDTDDDLPTFTSAMRLPPAPEAPVPGTPPPRYNTL) is disordered. Residues 585–598 (PPSTETPSSQQGQD) are compositionally biased toward polar residues. Over residues 618 to 632 (PPAPEAPVPGTPPPR) the composition is skewed to pro residues. Residues 629–633 (PPPRY) carry the PY motif; recruits WW domain-containing proteins and is thereby required for ubiquitination and inhibition of the channel by NEDD4 and NEDD4L motif.

The protein belongs to the amiloride-sensitive sodium channel (TC 1.A.6) family. SCNN1G subfamily. Component of the heterotrimeric epithelial sodium channel (ENaC) composed of an alpha/SCNN1A, a beta/SCNN1B and a gamma/SCNN1G subunit. Interacts with WWP1 (via WW domains). Interacts with WWP2 (via WW domains); inhibits the channel. Interacts with the full-length immature form of PCSK9 (pro-PCSK9); inhibits ENaC by promoting its proteasomal degradation. Interacts with BPIFA1; the interaction is indirect via SCNN1B and inhibits the proteolytic maturation of SCNN1A and SCNN1G and the activation of ENaC. Post-translationally, phosphorylated on serine and threonine residues. Aldosterone and insulin increase the basal level of phosphorylation. Ubiquitinated. Can be ubiquitinated at multiple sites and undergo monoubiquitination and polyubiquitination. Ubiquitination by NEDD4 or NEDD4L inhibits the ENaC channel through endocytosis, intracellular retention and degradation of its individual subunits. In terms of processing, ENaC is activated through the proteolytic maturation of its subunits. Furin cleaves the SCNN1G subunit first, followed by cleavage by prostasin (PRSS8), which results in a stepwise increase in the open probability of the channel due to the release of an inhibitory tract. BPIFA1, which is recruited by the SCNN1B subunit, prevents the proteolytic activation of ENaC. Post-translationally, N-glycosylated. N-linked glycans are processed to complex type during ENaC complex assembly and transport to the plasma membrane. As to expression, lung and kidney.

It is found in the apical cell membrane. It catalyses the reaction Na(+)(in) = Na(+)(out). With respect to regulation, originally identified and characterized by its inhibition by the diuretic drug amiloride. This is one of the three pore-forming subunits of the heterotrimeric epithelial sodium channel (ENaC), a critical regulator of sodium balance and fluid homeostasis. ENaC operates in epithelial tissues, where it mediates the electrodiffusion of sodium ions from extracellular fluid through the apical membrane of cells, with water following osmotically. It plays a key role in maintaining sodium homeostasis through electrogenic sodium reabsorption in the kidneys. Additionally, ENaC is essential for airway surface liquid homeostasis, which is crucial for proper mucus clearance. The sequence is that of Epithelial sodium channel subunit gamma from Mus musculus (Mouse).